The sequence spans 1543 residues: ATP-binding cassette sub-family A member 10 (1543 aa).

7 helical membrane passes run 83-103 (YWLK…IEVT), 135-155 (WFHF…SLNV), 185-205 (ICFI…IPIV), 210-230 (FMVI…LAFL), 240-260 (LAGL…FTVL), 264-284 (LPLS…TAGM), and 310-330 (IATF…TLYF). Residues 391 to 626 (IRIRNVIKEY…WGIGYHLSLH (236 aa)) form the ABC transporter 1 domain. Residue 427–434 (GHNGAGKS) coordinates ATP. 8 consecutive transmembrane segments (helical) span residues 774–794 (LLCL…EKIM), 890–910 (LNCF…IFNF), 926–946 (IVLD…TNCV), 985–1005 (IPLY…IFLG), 1014–1034 (FVLV…TYVL), 1046–1066 (GFWS…MVST), 1073–1093 (LILC…MLLI), and 1113–1133 (KTIL…LFVI). A compositionally biased stretch (basic and acidic residues) spans 1153–1164 (ISPRSRETHPNP). Residues 1153–1177 (ISPRSRETHPNPEEPEEEDEDVQAE) are disordered. A compositionally biased stretch (acidic residues) spans 1165 to 1174 (EEPEEEDEDV). In terms of domain architecture, ABC transporter 2 spans 1206-1440 (YETKKSCFST…FGRDYLLEIK (235 aa)). 1239–1246 (GHNGAGKS) serves as a coordination point for ATP.

The protein belongs to the ABC transporter superfamily. ABCA family. Widely expressed. Highly expressed in skeletal muscle, heart, brain and gastrointestinal tract.

The protein localises to the membrane. Functionally, probable transporter which may play a role in macrophage lipid transport and homeostasis. The chain is ATP-binding cassette sub-family A member 10 (ABCA10) from Homo sapiens (Human).